A 584-amino-acid polypeptide reads, in one-letter code: Pectinesterase 3 (584 aa).

The N-terminal stretch at 1–50 (MTRIKEFFTKLSESSTNQNISNIPKKKKKLFLALFATLLVVAAVIGIVAG) is a signal peptide. A propeptide spanning residues 51–266 (VNSRKNSGDN…LSTGDRRLLQ (216 aa)) is cleaved from the precursor. N-linked (GlcNAc...) asparagine glycosylation is found at Asn108, Asn129, and Asn226. Thr348 and Gln378 together coordinate substrate. The Proton donor role is filled by Asp401. Cysteines 415 and 435 form a disulfide. Residue Asp422 is the Nucleophile of the active site. Arg490 and Trp492 together coordinate substrate.

This sequence in the N-terminal section; belongs to the PMEI family. It in the C-terminal section; belongs to the pectinesterase family. In the peel, expression is localized to the region of the flavedo close to the oil glands, and to the innermost layer of the albedo. In the lamella, expression is localized to the cell layers opposing the fruit tissue, and to the parenchyma surrounding the vascular tissue. In the fruit vesicles, expression is restricted to the peripheral cell layers and stalk cells. High levels of expression are detected in the core matrix.

The protein resides in the secreted. Its subcellular location is the cell wall. The enzyme catalyses [(1-&gt;4)-alpha-D-galacturonosyl methyl ester](n) + n H2O = [(1-&gt;4)-alpha-D-galacturonosyl](n) + n methanol + n H(+). Its pathway is glycan metabolism; pectin degradation; 2-dehydro-3-deoxy-D-gluconate from pectin: step 1/5. Its function is as follows. Acts in the modification of cell walls via demethylesterification of cell wall pectin. This Citrus sinensis (Sweet orange) protein is Pectinesterase 3.